A 491-amino-acid polypeptide reads, in one-letter code: (1S)-1-hydroxy-luvungin A synthase CYP88A37 (491 aa).

The chain crosses the membrane as a helical span at residues 5–25 (FSWLILALAIFIGTYAFVFGV). Cys-439 contributes to the heme binding site.

This sequence belongs to the cytochrome P450 family. The cofactor is heme. Expressed in maturing fruits and in juice vesicles.

The protein resides in the membrane. The catalysed reaction is luvungin A + reduced [NADPH--hemoprotein reductase] + O2 = (1S)-1-hydroxy-luvungin A + oxidized [NADPH--hemoprotein reductase] + H2O + H(+). It functions in the pathway secondary metabolite biosynthesis; terpenoid biosynthesis. Functionally, monooxygenase involved in the biosynthesis of limonoids triterpene natural products such as limonin, a compound with insecticidal activity responsible for the bitter taste in citrus. Catalyzes the conversion of luvungin A to (1S)-1-hydroxy-luvungin A. This Citrus sinensis (Sweet orange) protein is (1S)-1-hydroxy-luvungin A synthase CYP88A37.